We begin with the raw amino-acid sequence, 225 residues long: Cytidylate kinase (225 aa).

11–19 (GPAAAGKST) is a binding site for ATP.

It belongs to the cytidylate kinase family. Type 1 subfamily.

The protein resides in the cytoplasm. The catalysed reaction is CMP + ATP = CDP + ADP. The enzyme catalyses dCMP + ATP = dCDP + ADP. This chain is Cytidylate kinase, found in Bacillus cytotoxicus (strain DSM 22905 / CIP 110041 / 391-98 / NVH 391-98).